The following is a 426-amino-acid chain: Dihydroorotase (426 aa).

Positions 58 and 60 each coordinate Zn(2+). Substrate-binding positions include histidine 60–arginine 62 and asparagine 92. Positions 150, 177, and 230 each coordinate Zn(2+). Residue asparagine 276 participates in substrate binding. Aspartate 303 is a binding site for Zn(2+). Aspartate 303 is an active-site residue. Substrate-binding positions include histidine 307 and phenylalanine 321–glycine 322.

It belongs to the metallo-dependent hydrolases superfamily. DHOase family. Class I DHOase subfamily. The cofactor is Zn(2+).

The catalysed reaction is (S)-dihydroorotate + H2O = N-carbamoyl-L-aspartate + H(+). It participates in pyrimidine metabolism; UMP biosynthesis via de novo pathway; (S)-dihydroorotate from bicarbonate: step 3/3. Functionally, catalyzes the reversible cyclization of carbamoyl aspartate to dihydroorotate. The chain is Dihydroorotase from Listeria innocua serovar 6a (strain ATCC BAA-680 / CLIP 11262).